The sequence spans 306 residues: D-alanine--D-alanine ligase (306 aa).

An ATP-grasp domain is found at 102–300 (KIVVASVGVS…YGDIVQWMVE (199 aa)). 128 to 183 (PMEPPYVIKPVCEGSSLGVIIVKENESVPSLNVVGSEWVYADTVIVEKYIPGRELT) is a binding site for ATP. Residues D253, E267, and N269 each coordinate Mg(2+).

Belongs to the D-alanine--D-alanine ligase family. Requires Mg(2+) as cofactor. Mn(2+) serves as cofactor.

The protein resides in the cytoplasm. The enzyme catalyses 2 D-alanine + ATP = D-alanyl-D-alanine + ADP + phosphate + H(+). It functions in the pathway cell wall biogenesis; peptidoglycan biosynthesis. Cell wall formation. This is D-alanine--D-alanine ligase from Bartonella henselae (strain ATCC 49882 / DSM 28221 / CCUG 30454 / Houston 1) (Rochalimaea henselae).